Here is a 103-residue protein sequence, read N- to C-terminus: Somatostatin-2 (103 aa).

Residues 1 to 21 (MLGSAGTLLLLLLAWGARALS) form the signal peptide. The propeptide occupies 22–87 (QPDDNRITTG…VKFPRLSLRE (66 aa)). A disulfide bond links cysteine 92 and cysteine 103.

Belongs to the somatostatin family.

Its subcellular location is the secreted. Functionally, somatostatin inhibits the release of somatotropin. The sequence is that of Somatostatin-2 (sst2) from Pelophylax ridibundus (Marsh frog).